We begin with the raw amino-acid sequence, 126 residues long: Nascent polypeptide-associated complex protein (126 aa).

Residues 10-77 enclose the NAC-A/B domain; sequence PRMMKQMQKM…AKKVAKEEEK (68 aa).

Belongs to the NAC-alpha family. Homodimer. Interacts with the ribosome. Binds ribosomal RNA.

Contacts the emerging nascent chain on the ribosome. The protein is Nascent polypeptide-associated complex protein of Methanococcus maripaludis (strain C7 / ATCC BAA-1331).